The primary structure comprises 750 residues: Neprilysin (750 aa).

The N-myristoyl glycine moiety is linked to residue G2. Over 2–28 (GRSESQMDITDINAPKPKKKQRWTPLE) the chain is Cytoplasmic. Phosphoserine is present on residues S4 and S6. The Stop-transfer sequence signature appears at 16 to 23 (PKPKKKQR). The chain crosses the membrane as a helical; Signal-anchor for type II membrane protein span at residues 29–51 (ISLSVLVLLLTIIAVTMIALYAT). Residues 52–750 (YDDGICKSSD…MNPERKCRVW (699 aa)) lie on the Extracellular side of the membrane. The Peptidase M13 domain maps to 56 to 750 (ICKSSDCIKS…MNPERKCRVW (695 aa)). 6 disulfide bridges follow: C57–C62, C80–C735, C88–C695, C143–C411, C234–C242, and C621–C747. R103 is a binding site for a peptide. N145 and N211 each carry an N-linked (GlcNAc...) asparagine glycan. Residues N285, N311, and N325 are each glycosylated (N-linked (GlcNAc...) asparagine). Residue H584 participates in Zn(2+) binding. E585 is an active-site residue. Residue H588 coordinates Zn(2+). An N-linked (GlcNAc...) asparagine glycan is attached at N628. Residue E647 coordinates Zn(2+). The active-site Proton donor is the D651.

This sequence belongs to the peptidase M13 family. The cofactor is Zn(2+). Myristoylation is a determinant of membrane targeting. In terms of processing, glycosylation at Asn-628 is necessary both for surface expression and neutral endopeptidase activity.

Its subcellular location is the cell membrane. The enzyme catalyses Preferential cleavage of polypeptides between hydrophobic residues, particularly with Phe or Tyr at P1'.. It carries out the reaction substance P + H2O = substance P(1-9) + L-Leu-L-Met-NH2. The catalysed reaction is substance P + H2O = substance P(1-7) + L-Phe-Gly-L-Leu-L-Met-NH2. It catalyses the reaction neurotensin + H2O = neurotensin(1-11) + L-isoleucyl-L-leucine. The enzyme catalyses neurotensin + H2O = neurotensin(1-10) + L-tyrosyl-L-isoleucyl-L-leucine. Functionally, thermolysin-like specificity, but is almost confined on acting on polypeptides of up to 30 amino acids. Biologically important in the destruction of opioid peptides such as Met- and Leu-enkephalins by cleavage of a Gly-Phe bond. Catalyzes cleavage of bradykinin, substance P and neurotensin peptides. Able to cleave angiotensin-1, angiotensin-2 and angiotensin 1-9. Involved in the degradation of the atrial natriuretic factor (ANF). Displays UV-inducible elastase activity toward skin preelastic and elastic fibers. This chain is Neprilysin, found in Mus musculus (Mouse).